The sequence spans 267 residues: Indole-3-glycerol phosphate synthase (267 aa).

It belongs to the TrpC family.

The catalysed reaction is 1-(2-carboxyphenylamino)-1-deoxy-D-ribulose 5-phosphate + H(+) = (1S,2R)-1-C-(indol-3-yl)glycerol 3-phosphate + CO2 + H2O. The protein operates within amino-acid biosynthesis; L-tryptophan biosynthesis; L-tryptophan from chorismate: step 4/5. This chain is Indole-3-glycerol phosphate synthase, found in Delftia acidovorans (strain DSM 14801 / SPH-1).